The primary structure comprises 293 residues: MGVVNELRQRTWSGMLNVEVVLNPKLVVQGMPDEQVRCHLRIPRESYLVLHLPFVLNKLRGVLRQEVKDAFHGWWFGMEDVLVHWNHPVGTLYDSLVGLRPQERAAQFQANTLTMWTLTLNYSEDARDGSVPLVGGMQQVEDFWRHQWKQACYIIHGSSKQIMSLSIPDSKTFWDCVLQRDERVFRGIASRITARKGGVKALPVRIHQTTLRELRTLQPTVKPGEWGGGTLGELLRAELPECFKNGSVLRPVVHGIEVSPESQLADLYHLFCSFDGFLHISICSPVALIIPTT.

Lysine 149 is covalently cross-linked (Glycyl lysine isopeptide (Lys-Gly) (interchain with G-Cter in ATG12)).

The protein belongs to the ATG5 family. Conjugated with ATG12. Post-translationally, conjugated to ATG12; which is essential for autophagy.

It is found in the preautophagosomal structure membrane. In terms of biological role, involved in cytoplasm to vacuole transport (Cvt) and autophagic vesicle formation. Autophagy is essential for maintenance of amino acid levels and protein synthesis under nitrogen starvation. Required for selective autophagic degradation of the nucleus (nucleophagy). Also required for mitophagy, which eliminates defective or superfluous mitochondria in order to fulfill cellular energy requirements and prevent excess ROS production. Conjugation with ATG12, through a ubiquitin-like conjugating system involving ATG7 as an E1-like activating enzyme and ATG10 as an E2-like conjugating enzyme, is essential for its function. The ATG12-ATG5 conjugate acts as an E3-like enzyme which is required for lipidation of ATG8 and ATG8 association to the vesicle membranes. The polypeptide is Autophagy protein 5 (ATG5) (Eremothecium gossypii (strain ATCC 10895 / CBS 109.51 / FGSC 9923 / NRRL Y-1056) (Yeast)).